The primary structure comprises 336 residues: Ribosomal RNA large subunit methyltransferase F (336 aa).

This sequence belongs to the methyltransferase superfamily. METTL16/RlmF family.

The protein resides in the cytoplasm. The catalysed reaction is adenosine(1618) in 23S rRNA + S-adenosyl-L-methionine = N(6)-methyladenosine(1618) in 23S rRNA + S-adenosyl-L-homocysteine + H(+). Functionally, specifically methylates the adenine in position 1618 of 23S rRNA. This chain is Ribosomal RNA large subunit methyltransferase F, found in Yersinia pestis (strain Pestoides F).